Here is a 179-residue protein sequence, read N- to C-terminus: MDREDINPMLSRLDVENNNTFSSFVDKTLMMMPPSTFSGEVEPSSSSSWYPESFHVHAPPLPPENDQIGEKGKELKEKRSRKVPRIAFHTRSDDDVLDDGYRWRKYGQKSVKHNAHPRSYYRCTYHTCNVKKQVQRLAKDPNVVVTTYEGVHNHPCEKLMETLNPLLRQLQFLSSFSNL.

The WRKY DNA-binding region spans 92–157; the sequence is SDDDVLDDGY…YEGVHNHPCE (66 aa).

Belongs to the WRKY group II-c family.

It is found in the nucleus. In terms of biological role, transcription factor. Interacts specifically with the W box (5'-(T)TGAC[CT]-3'), a frequently occurring elicitor-responsive cis-acting element. The sequence is that of Probable WRKY transcription factor 24 (WRKY24) from Arabidopsis thaliana (Mouse-ear cress).